Here is a 656-residue protein sequence, read N- to C-terminus: Pheromone-processing carboxypeptidase KEX1 (656 aa).

Residues 1–17 (MFFHAILVLIQVALALG) form the signal peptide. Topologically, residues 18–536 (ASPRAGSSER…DNNTSHKIER (519 aa)) are lumenal. N-linked (GlcNAc...) asparagine glycosylation is found at Asn61 and Asn118. Catalysis depends on residues Ser180 and Asp388. 2 N-linked (GlcNAc...) asparagine glycosylation sites follow: Asn434 and Asn442. His445 is a catalytic residue. Residues 537–557 (AIQLLVIIVLLWGIYALYSSY) form a helical membrane-spanning segment. The Cytoplasmic portion of the chain corresponds to 558–656 (KSRPSSIIKS…SRNEPSSNQK (99 aa)). The tract at residues 626-656 (MSSASPIDDFVVVSDDEEEEPSRNEPSSNQK) is disordered.

This sequence belongs to the peptidase S10 family.

The protein resides in the golgi apparatus. It localises to the trans-Golgi network membrane. It catalyses the reaction Preferential release of a C-terminal arginine or lysine residue.. Its function is as follows. Protease with a carboxypeptidase B-like function involved in the C-terminal processing of the lysine and arginine residues from protein precursors. Promotes cell fusion and is involved in the programmed cell death. The protein is Pheromone-processing carboxypeptidase KEX1 (KEX1) of Meyerozyma guilliermondii (strain ATCC 6260 / CBS 566 / DSM 6381 / JCM 1539 / NBRC 10279 / NRRL Y-324) (Yeast).